The sequence spans 87 residues: uncharacterized protein (87 aa).

The next 2 helical transmembrane spans lie at 7-27 and 64-84; these read LFFI…LYSI and GINI…IPLF.

The protein resides in the membrane. This is an uncharacterized protein from Schizosaccharomyces pombe (strain 972 / ATCC 24843) (Fission yeast).